The primary structure comprises 358 residues: 3-dehydroquinate synthase (358 aa).

NAD(+) is bound by residues 70-75 (DGEQFK), 104-108 (GVIGD), 128-129 (TT), lysine 141, lysine 150, and 168-171 (CLHT). Residues glutamate 183, histidine 246, and histidine 263 each contribute to the Zn(2+) site.

This sequence belongs to the sugar phosphate cyclases superfamily. Dehydroquinate synthase family. It depends on Co(2+) as a cofactor. Zn(2+) serves as cofactor. The cofactor is NAD(+).

It is found in the cytoplasm. It catalyses the reaction 7-phospho-2-dehydro-3-deoxy-D-arabino-heptonate = 3-dehydroquinate + phosphate. Its pathway is metabolic intermediate biosynthesis; chorismate biosynthesis; chorismate from D-erythrose 4-phosphate and phosphoenolpyruvate: step 2/7. Functionally, catalyzes the conversion of 3-deoxy-D-arabino-heptulosonate 7-phosphate (DAHP) to dehydroquinate (DHQ). This Shewanella baltica (strain OS195) protein is 3-dehydroquinate synthase.